A 321-amino-acid polypeptide reads, in one-letter code: L-carnitine dehydrogenase (321 aa).

Position 7-12 (7-12 (GTGVIG)) interacts with NAD(+).

It belongs to the 3-hydroxyacyl-CoA dehydrogenase family. L-carnitine dehydrogenase subfamily. Homodimer.

It localises to the cytoplasm. The enzyme catalyses carnitine + NAD(+) = 3-dehydrocarnitine + NADH + H(+). It participates in amine and polyamine metabolism; carnitine metabolism. Catalyzes the NAD(+)-dependent oxidation of L-carnitine to 3-dehydrocarnitine. The polypeptide is L-carnitine dehydrogenase (Staphylococcus epidermidis (strain ATCC 12228 / FDA PCI 1200)).